A 24-amino-acid polypeptide reads, in one-letter code: Coenzyme PQQ synthesis protein A (24 aa).

The pyrroloquinoline quinone (Glu-Tyr) cross-link spans 16-20; it reads EITMY.

Belongs to the PqqA family.

It functions in the pathway cofactor biosynthesis; pyrroloquinoline quinone biosynthesis. Its function is as follows. Required for coenzyme pyrroloquinoline quinone (PQQ) biosynthesis. PQQ is probably formed by cross-linking a specific glutamate to a specific tyrosine residue and excising these residues from the peptide. This Variovorax paradoxus (strain S110) protein is Coenzyme PQQ synthesis protein A.